The primary structure comprises 342 residues: UDP-3-O-acylglucosamine N-acyltransferase (342 aa).

Histidine 238 serves as the catalytic Proton acceptor.

This sequence belongs to the transferase hexapeptide repeat family. LpxD subfamily. Homotrimer.

The catalysed reaction is a UDP-3-O-[(3R)-3-hydroxyacyl]-alpha-D-glucosamine + a (3R)-hydroxyacyl-[ACP] = a UDP-2-N,3-O-bis[(3R)-3-hydroxyacyl]-alpha-D-glucosamine + holo-[ACP] + H(+). The protein operates within bacterial outer membrane biogenesis; LPS lipid A biosynthesis. Catalyzes the N-acylation of UDP-3-O-acylglucosamine using 3-hydroxyacyl-ACP as the acyl donor. Is involved in the biosynthesis of lipid A, a phosphorylated glycolipid that anchors the lipopolysaccharide to the outer membrane of the cell. This chain is UDP-3-O-acylglucosamine N-acyltransferase, found in Tolumonas auensis (strain DSM 9187 / NBRC 110442 / TA 4).